The primary structure comprises 184 residues: GTP cyclohydrolase 1 (184 aa).

The Zn(2+) site is built by C75, H78, and C146.

This sequence belongs to the GTP cyclohydrolase I family. Toroid-shaped homodecamer, composed of two pentamers of five dimers.

The catalysed reaction is GTP + H2O = 7,8-dihydroneopterin 3'-triphosphate + formate + H(+). It participates in cofactor biosynthesis; 7,8-dihydroneopterin triphosphate biosynthesis; 7,8-dihydroneopterin triphosphate from GTP: step 1/1. The polypeptide is GTP cyclohydrolase 1 (Chromohalobacter salexigens (strain ATCC BAA-138 / DSM 3043 / CIP 106854 / NCIMB 13768 / 1H11)).